The sequence spans 269 residues: 5'-nucleotidase SurE (269 aa).

A divalent metal cation is bound by residues Asp-11, Asp-12, Ser-43, and Asn-101.

It belongs to the SurE nucleotidase family. Requires a divalent metal cation as cofactor.

The protein localises to the cytoplasm. The enzyme catalyses a ribonucleoside 5'-phosphate + H2O = a ribonucleoside + phosphate. Its function is as follows. Nucleotidase that shows phosphatase activity on nucleoside 5'-monophosphates. The protein is 5'-nucleotidase SurE of Prochlorococcus marinus subsp. pastoris (strain CCMP1986 / NIES-2087 / MED4).